Reading from the N-terminus, the 1289-residue chain is SH3 domain and tetratricopeptide repeat-containing protein 2 (1289 aa).

SH3 domains follow at residues 176-239 (EGHF…PLPV) and 267-330 (IGRG…LDSC). The tract at residues 393-442 (SQPEGFREARSGGTWMERQTIGSRRSSGSGDSSPEEDELISASSDSYHLP) is disordered. Residues 414-424 (GSRRSSGSGDS) show a composition bias toward low complexity. TPR repeat units follow at residues 529-562 (ARLC…LDGA), 758-791 (RTLC…GKLL), 837-870 (GVVH…AREM), 1002-1038 (GQLL…FVDL), 1085-1119 (LKLY…LARR), 1120-1153 (MKAL…ATLA), 1167-1200 (LVAF…CPPW), and 1211-1245 (AKVY…AVLM).

This chain is SH3 domain and tetratricopeptide repeat-containing protein 2 (Sh3tc2), found in Mus musculus (Mouse).